A 780-amino-acid polypeptide reads, in one-letter code: Endonuclease MutS2 (780 aa).

An ATP-binding site is contributed by 334-341; it reads GPNAGGKT. One can recognise a Smr domain in the interval 706 to 780; sequence IDIRGMRSVD…GGSGKTIVEI (75 aa).

It belongs to the DNA mismatch repair MutS family. MutS2 subfamily. As to quaternary structure, homodimer. Binds to stalled ribosomes, contacting rRNA.

Its function is as follows. Endonuclease that is involved in the suppression of homologous recombination and thus may have a key role in the control of bacterial genetic diversity. In terms of biological role, acts as a ribosome collision sensor, splitting the ribosome into its 2 subunits. Detects stalled/collided 70S ribosomes which it binds and splits by an ATP-hydrolysis driven conformational change. Acts upstream of the ribosome quality control system (RQC), a ribosome-associated complex that mediates the extraction of incompletely synthesized nascent chains from stalled ribosomes and their subsequent degradation. Probably generates substrates for RQC. The chain is Endonuclease MutS2 from Borreliella burgdorferi (strain ATCC 35210 / DSM 4680 / CIP 102532 / B31) (Borrelia burgdorferi).